The following is a 238-amino-acid chain: Ribonuclease 3 (238 aa).

In terms of domain architecture, RNase III spans Tyr-17 to Gly-140. Glu-53 contributes to the Mg(2+) binding site. Asp-57 is an active-site residue. Mg(2+) contacts are provided by Ser-126 and Glu-129. The active site involves Glu-129. Residues Asp-167–Glu-236 form the DRBM domain.

Belongs to the ribonuclease III family. In terms of assembly, homodimer. The cofactor is Mg(2+).

Its subcellular location is the cytoplasm. It carries out the reaction Endonucleolytic cleavage to 5'-phosphomonoester.. Its function is as follows. Digests double-stranded RNA. Involved in the processing of primary rRNA transcript to yield the immediate precursors to the large and small rRNAs (23S and 16S). Processes some mRNAs, and tRNAs when they are encoded in the rRNA operon. Processes pre-crRNA and tracrRNA of type II CRISPR loci if present in the organism. This is Ribonuclease 3 from Helicobacter pylori (strain Shi470).